We begin with the raw amino-acid sequence, 61 residues long: Photosystem II reaction center protein K (61 aa).

The propeptide occupies 1–24; it reads MLNIFCLICICLNSTLYSSSFFFA. Residues 32–52 traverse the membrane as a helical segment; it reads FFNPIIDVMPIIPVLFFLLAF.

It belongs to the PsbK family. PSII is composed of 1 copy each of membrane proteins PsbA, PsbB, PsbC, PsbD, PsbE, PsbF, PsbH, PsbI, PsbJ, PsbK, PsbL, PsbM, PsbT, PsbX, PsbY, PsbZ, Psb30/Ycf12, at least 3 peripheral proteins of the oxygen-evolving complex and a large number of cofactors. It forms dimeric complexes.

Its subcellular location is the plastid. The protein localises to the chloroplast thylakoid membrane. Functionally, one of the components of the core complex of photosystem II (PSII). PSII is a light-driven water:plastoquinone oxidoreductase that uses light energy to abstract electrons from H(2)O, generating O(2) and a proton gradient subsequently used for ATP formation. It consists of a core antenna complex that captures photons, and an electron transfer chain that converts photonic excitation into a charge separation. This is Photosystem II reaction center protein K from Phalaenopsis aphrodite subsp. formosana (Moth orchid).